The following is a 192-amino-acid chain: UPF0301 protein Bcep1808_0798 (192 aa).

It belongs to the UPF0301 (AlgH) family.

The chain is UPF0301 protein Bcep1808_0798 from Burkholderia vietnamiensis (strain G4 / LMG 22486) (Burkholderia cepacia (strain R1808)).